A 65-amino-acid polypeptide reads, in one-letter code: Muscarinic toxin-like protein 2 (65 aa).

4 cysteine pairs are disulfide-bonded: Cys-3–Cys-24, Cys-17–Cys-42, Cys-46–Cys-57, and Cys-58–Cys-63.

The protein belongs to the three-finger toxin family. Short-chain subfamily. Type C muscarinic toxin sub-subfamily. Monomer. In terms of tissue distribution, expressed by the venom gland.

It localises to the secreted. The chain is Muscarinic toxin-like protein 2 from Naja kaouthia (Monocled cobra).